Here is an 81-residue protein sequence, read N- to C-terminus: uncharacterized protein (81 aa).

The SpoVT-AbrB domain occupies methionine 1–threonine 45.

This sequence to B.subtilis SpoVT.

This is an uncharacterized protein from Mycobacterium bovis (strain ATCC BAA-935 / AF2122/97).